Reading from the N-terminus, the 237-residue chain is NAD-dependent protein deacetylase (237 aa).

The region spanning 1 to 237 is the Deacetylase sirtuin-type domain; that stretch reads MFTTSLRQAQ…LVETNRALQK (237 aa). The NAD(+) site is built by Ala18, Thr22, Phe29, Arg30, Gln95, Asp98, and His113. Phe29 serves as a coordination point for nicotinamide. Asp98 serves as a coordination point for nicotinamide. His113 (proton acceptor) is an active-site residue. Residues Cys121, Cys124, Cys140, and Cys142 each contribute to the Zn(2+) site. Positions 180, 181, 205, and 224 each coordinate NAD(+).

The protein belongs to the sirtuin family. Class U subfamily. Requires Zn(2+) as cofactor.

The protein resides in the cytoplasm. It carries out the reaction N(6)-acetyl-L-lysyl-[protein] + NAD(+) + H2O = 2''-O-acetyl-ADP-D-ribose + nicotinamide + L-lysyl-[protein]. In terms of biological role, NAD-dependent protein deacetylase which modulates the activities of several enzymes which are inactive in their acetylated form. The polypeptide is NAD-dependent protein deacetylase (Shouchella clausii (strain KSM-K16) (Alkalihalobacillus clausii)).